A 173-amino-acid chain; its full sequence is NADH-ubiquinone oxidoreductase chain 6 (173 aa).

5 consecutive transmembrane segments (helical) span residues methionine 1–serine 21, alanine 24–valine 44, leucine 53–leucine 73, valine 87–glycine 107, and glycine 141–leucine 161.

It belongs to the complex I subunit 6 family.

It localises to the mitochondrion membrane. It catalyses the reaction a ubiquinone + NADH + 5 H(+)(in) = a ubiquinol + NAD(+) + 4 H(+)(out). Core subunit of the mitochondrial membrane respiratory chain NADH dehydrogenase (Complex I) that is believed to belong to the minimal assembly required for catalysis. Complex I functions in the transfer of electrons from NADH to the respiratory chain. The immediate electron acceptor for the enzyme is believed to be ubiquinone. In Oncorhynchus mykiss (Rainbow trout), this protein is NADH-ubiquinone oxidoreductase chain 6 (MT-ND6).